The sequence spans 238 residues: Large ribosomal subunit protein uL2 (238 aa).

Positions 199–238 (PHGGGLHQSVSRSSTVARNTPPGRKVGHIAARRTGRRDRK) are disordered. The span at 206–216 (QSVSRSSTVAR) shows a compositional bias: polar residues. The segment covering 223–238 (KVGHIAARRTGRRDRK) has biased composition (basic residues).

This sequence belongs to the universal ribosomal protein uL2 family. As to quaternary structure, part of the 50S ribosomal subunit. Forms a bridge to the 30S subunit in the 70S ribosome.

Its function is as follows. One of the primary rRNA binding proteins. Required for association of the 30S and 50S subunits to form the 70S ribosome, for tRNA binding and peptide bond formation. It has been suggested to have peptidyltransferase activity; this is somewhat controversial. Makes several contacts with the 16S rRNA in the 70S ribosome. This Metallosphaera sedula (strain ATCC 51363 / DSM 5348 / JCM 9185 / NBRC 15509 / TH2) protein is Large ribosomal subunit protein uL2.